Consider the following 802-residue polypeptide: Bifunctional purine biosynthetic protein ADE5,7 (802 aa).

Positions 1–444 are GARS; sequence MPEITAFPQP…FRRDIAYRAL (444 aa). An ATP-grasp domain is found at 126-339; that stretch reads KEFMARHNIP…LAEVLLACVE (214 aa). Position 157-218 (157-218) interacts with ATP; that stretch reads KPFTSGRSVI…EEYLSGPEIS (62 aa). Positions 307 and 309 each coordinate Mg(2+). The segment at 455–788 is AIRS; it reads LTYAAAGVSV…EAWVIGEVQE (334 aa).

The protein in the N-terminal section; belongs to the GARS family. It in the C-terminal section; belongs to the AIR synthase family. Homodimer. Mg(2+) is required as a cofactor. Requires Mn(2+) as cofactor.

It is found in the cytoplasm. The protein resides in the cytosol. It catalyses the reaction 2-formamido-N(1)-(5-O-phospho-beta-D-ribosyl)acetamidine + ATP = 5-amino-1-(5-phospho-beta-D-ribosyl)imidazole + ADP + phosphate + H(+). The enzyme catalyses 5-phospho-beta-D-ribosylamine + glycine + ATP = N(1)-(5-phospho-beta-D-ribosyl)glycinamide + ADP + phosphate + H(+). It functions in the pathway purine metabolism; IMP biosynthesis via de novo pathway; 5-amino-1-(5-phospho-D-ribosyl)imidazole from N(2)-formyl-N(1)-(5-phospho-D-ribosyl)glycinamide: step 2/2. The protein operates within purine metabolism; IMP biosynthesis via de novo pathway; N(1)-(5-phospho-D-ribosyl)glycinamide from 5-phospho-alpha-D-ribose 1-diphosphate: step 2/2. Functionally, catalyzes the second and fifth step in the 'de novo' purine biosynthesis pathway; contains phosphoribosylamine--glycine ligase (GARS) and phosphoribosylformylglycinamidine cyclo-ligase (AIRS) activities. This chain is Bifunctional purine biosynthetic protein ADE5,7, found in Cryptococcus neoformans var. grubii serotype A (strain H99 / ATCC 208821 / CBS 10515 / FGSC 9487) (Filobasidiella neoformans var. grubii).